Reading from the N-terminus, the 25-residue chain is Snake venom metalloproteinase catroxase (25 aa).

Ca(2+) is bound at residue Glu-9.

This sequence belongs to the venom metalloproteinase (M12B) family. Monomer. The cofactor is Zn(2+). Expressed by the venom gland.

Its subcellular location is the secreted. With respect to regulation, inhibited by EDTA, beta-mercaptoethanol, but not by PMSF, p-tosyl-L-phenylalanine chloromethyl ketone, p-tosyl-L-lysine chloromethyl ketone, soybean trypsin inhibitor and aprotinin. In terms of biological role, metalloprotease that is highly active against alpha-(FGA) and beta-chains (FGB) of fibrinogen molecules. In Crotalus atrox (Western diamondback rattlesnake), this protein is Snake venom metalloproteinase catroxase.